The sequence spans 416 residues: Serine hydroxymethyltransferase (416 aa).

Residues Leu119 and 123–125 (GHL) each bind (6S)-5,6,7,8-tetrahydrofolate. An N6-(pyridoxal phosphate)lysine modification is found at Lys228. Glu243 contributes to the (6S)-5,6,7,8-tetrahydrofolate binding site.

Belongs to the SHMT family. In terms of assembly, homodimer. Pyridoxal 5'-phosphate is required as a cofactor.

It localises to the cytoplasm. It catalyses the reaction (6R)-5,10-methylene-5,6,7,8-tetrahydrofolate + glycine + H2O = (6S)-5,6,7,8-tetrahydrofolate + L-serine. The protein operates within one-carbon metabolism; tetrahydrofolate interconversion. Its pathway is amino-acid biosynthesis; glycine biosynthesis; glycine from L-serine: step 1/1. Its function is as follows. Catalyzes the reversible interconversion of serine and glycine with tetrahydrofolate (THF) serving as the one-carbon carrier. This reaction serves as the major source of one-carbon groups required for the biosynthesis of purines, thymidylate, methionine, and other important biomolecules. Also exhibits THF-independent aldolase activity toward beta-hydroxyamino acids, producing glycine and aldehydes, via a retro-aldol mechanism. The sequence is that of Serine hydroxymethyltransferase from Desulforapulum autotrophicum (strain ATCC 43914 / DSM 3382 / VKM B-1955 / HRM2) (Desulfobacterium autotrophicum).